The chain runs to 443 residues: Xaa-Pro dipeptidase (443 aa).

Mn(2+)-binding residues include Asp-248, Asp-259, His-339, Glu-384, and Glu-423.

Belongs to the peptidase M24B family. Bacterial-type prolidase subfamily. Mn(2+) serves as cofactor.

The enzyme catalyses Xaa-L-Pro dipeptide + H2O = an L-alpha-amino acid + L-proline. In terms of biological role, splits dipeptides with a prolyl residue in the C-terminal position. This is Xaa-Pro dipeptidase from Colwellia psychrerythraea (strain 34H / ATCC BAA-681) (Vibrio psychroerythus).